Consider the following 498-residue polypeptide: Hexokinase-3 (498 aa).

A helical membrane pass occupies residues 4–24 (VAVAFAAVAVVAACSVAAVMV). The region spanning 35–494 (RTVVEILKEL…SSIGSALLVA (460 aa)) is the Hexokinase domain. Positions 90-227 (TGREKGTYYA…GLDMHVAALV (138 aa)) are hexokinase small subdomain. Residues glycine 104 and threonine 105 each contribute to the ADP site. Residues threonine 193, lysine 194, asparagine 228, and aspartate 229 each contribute to the D-glucose site. The tract at residues 228–483 (NDTVGALSLG…QYVVVKAMED (256 aa)) is hexokinase large subdomain. Threonine 252 is an ADP binding site. D-glucose-binding residues include asparagine 255, glutamate 283, and glutamate 314. ADP is bound at residue glycine 448.

This sequence belongs to the hexokinase family. As to expression, expressed in roots, emerging lateral roots, vascular tissues of cotyledons, roots and leaves, root and shoot meristems, anther filaments and funiculi of mature seeds.

It is found in the mitochondrion outer membrane. It carries out the reaction a D-hexose + ATP = a D-hexose 6-phosphate + ADP + H(+). It catalyses the reaction D-fructose + ATP = D-fructose 6-phosphate + ADP + H(+). The enzyme catalyses D-glucose + ATP = D-glucose 6-phosphate + ADP + H(+). The protein operates within carbohydrate metabolism; hexose metabolism. It participates in carbohydrate degradation; glycolysis; D-glyceraldehyde 3-phosphate and glycerone phosphate from D-glucose: step 1/4. Fructose and glucose phosphorylating enzyme. May be involved in the phosphorylation of glucose during the export from mitochondrion to cytosol. Plays a role in plant growth and development, perhaps by mediating cross-talk between glucose and hormone response pathways. Involved in root hair cell development by mediating certain aspects of cross talk between glucose and ethylene response pathways. This chain is Hexokinase-3, found in Arabidopsis thaliana (Mouse-ear cress).